Here is a 122-residue protein sequence, read N- to C-terminus: Basic phospholipase A2 (122 aa).

Intrachain disulfides connect cysteine 26-cysteine 115, cysteine 28-cysteine 44, cysteine 43-cysteine 95, cysteine 49-cysteine 122, cysteine 50-cysteine 88, cysteine 57-cysteine 81, and cysteine 75-cysteine 86. Residues tyrosine 27, glycine 29, and glycine 31 each coordinate Ca(2+). Residue histidine 47 is part of the active site. Aspartate 48 is a binding site for Ca(2+). Residue aspartate 89 is part of the active site.

It belongs to the phospholipase A2 family. Group II subfamily. D49 sub-subfamily. The cofactor is Ca(2+). In terms of tissue distribution, expressed by the venom gland.

Its subcellular location is the secreted. The catalysed reaction is a 1,2-diacyl-sn-glycero-3-phosphocholine + H2O = a 1-acyl-sn-glycero-3-phosphocholine + a fatty acid + H(+). Snake venom phospholipase A2 (PLA2) that does not inhibit platelet aggregation. Exhibits cytotoxic and anticoagulant activity. Induces Ehrlich tumor growth but not angiogenesis. PLA2 catalyzes the calcium-dependent hydrolysis of the 2-acyl groups in 3-sn-phosphoglycerides. The sequence is that of Basic phospholipase A2 from Bothrops leucurus (Whitetail lancehead).